Here is a 181-residue protein sequence, read N- to C-terminus: ATP-dependent protease subunit HslV (181 aa).

Residue T6 is part of the active site. The Na(+) site is built by A162, C165, and T168.

It belongs to the peptidase T1B family. HslV subfamily. A double ring-shaped homohexamer of HslV is capped on each side by a ring-shaped HslU homohexamer. The assembly of the HslU/HslV complex is dependent on binding of ATP.

The protein localises to the cytoplasm. It catalyses the reaction ATP-dependent cleavage of peptide bonds with broad specificity.. Allosterically activated by HslU binding. Functionally, protease subunit of a proteasome-like degradation complex believed to be a general protein degrading machinery. In Solidesulfovibrio magneticus (strain ATCC 700980 / DSM 13731 / RS-1) (Desulfovibrio magneticus), this protein is ATP-dependent protease subunit HslV.